Reading from the N-terminus, the 488-residue chain is Acetyl-coenzyme A carboxylase carboxyl transferase subunit beta, chloroplastic (488 aa).

Residues 189 to 211 (ISGSDSGSSNIRTDGNGSDIRGR) are disordered. One can recognise a CoA carboxyltransferase N-terminal domain in the interval 224–488 (LWVQCENCYG…LHGFFPLTQN (265 aa)). Zn(2+)-binding residues include cysteine 228, cysteine 231, cysteine 247, and cysteine 250. Residues 228-250 (CENCYGLNYKKFFKSKMNICEQC) form a C4-type zinc finger.

The protein belongs to the AccD/PCCB family. As to quaternary structure, acetyl-CoA carboxylase is a heterohexamer composed of biotin carboxyl carrier protein, biotin carboxylase and 2 subunits each of ACCase subunit alpha and ACCase plastid-coded subunit beta (accD). The cofactor is Zn(2+).

The protein localises to the plastid. It is found in the chloroplast stroma. The enzyme catalyses N(6)-carboxybiotinyl-L-lysyl-[protein] + acetyl-CoA = N(6)-biotinyl-L-lysyl-[protein] + malonyl-CoA. It functions in the pathway lipid metabolism; malonyl-CoA biosynthesis; malonyl-CoA from acetyl-CoA: step 1/1. In terms of biological role, component of the acetyl coenzyme A carboxylase (ACC) complex. Biotin carboxylase (BC) catalyzes the carboxylation of biotin on its carrier protein (BCCP) and then the CO(2) group is transferred by the transcarboxylase to acetyl-CoA to form malonyl-CoA. This chain is Acetyl-coenzyme A carboxylase carboxyl transferase subunit beta, chloroplastic, found in Liriodendron tulipifera (Tuliptree).